Here is a 966-residue protein sequence, read N- to C-terminus: SH3 domain-binding protein 4 (966 aa).

The 60-residue stretch at 57-116 (GAAREVVAIKDCCPSSFTTLKFSKGDRLYVLDSSGAEWWYAHNNTEMGYIPAAYVEPINY) folds into the SH3 1 domain. Residues 322 to 457 (TNIVCRLDSS…LEPCMYVCVV (136 aa)) enclose the ZU5 domain. Positions 657–727 (NNLKFGKLIK…HAKNVLVVGK (71 aa)) constitute an SH3 2 domain.

As to quaternary structure, homodimer or homooligomer.

The protein localises to the membrane. Its subcellular location is the clathrin-coated pit. The protein resides in the cytoplasmic vesicle. It localises to the clathrin-coated vesicle. It is found in the nucleus. Its function is as follows. Possible role in regulating endocytosis of the transferrin receptor at the plasma membrane. Alternatively, may function as a negative regulator of the amino acid-induced TOR signaling by inhibiting the formation of active Rag GTPase complexes. Preferentially binds inactive Rag GTPase complexes and prevents their interaction with the mTORC1 complex inhibiting its relocalization to lysosomes and its activation. Thereby, may indirectly regulate cell growth, proliferation and autophagy. This Seriola quinqueradiata (Five-ray yellowtail) protein is SH3 domain-binding protein 4 (sh3bp4).